The following is a 233-amino-acid chain: Aspartate/glutamate leucyltransferase (233 aa).

This sequence belongs to the R-transferase family. Bpt subfamily.

Its subcellular location is the cytoplasm. It carries out the reaction N-terminal L-glutamyl-[protein] + L-leucyl-tRNA(Leu) = N-terminal L-leucyl-L-glutamyl-[protein] + tRNA(Leu) + H(+). The catalysed reaction is N-terminal L-aspartyl-[protein] + L-leucyl-tRNA(Leu) = N-terminal L-leucyl-L-aspartyl-[protein] + tRNA(Leu) + H(+). Functionally, functions in the N-end rule pathway of protein degradation where it conjugates Leu from its aminoacyl-tRNA to the N-termini of proteins containing an N-terminal aspartate or glutamate. The protein is Aspartate/glutamate leucyltransferase of Vibrio cholerae serotype O1 (strain ATCC 39541 / Classical Ogawa 395 / O395).